The sequence spans 189 residues: MDKTTLSVNACNLEYVREKAIVGVQAAKTSTLIFFVIILAISALLLWFQTSDNPVFNELTRYMRIKNTVNDWKSLTDSKTKLESDRGKLLAAGKDDIFEFKCVDFGAYFIAMRLDKKTYLPQAIRRGTGDAWMVKKAAKVDPSAQQFCQYLIKHKSNNVITCGNEMLNELGYSGYFMSPHWCSDFSNME.

Topologically, residues M1–K28 are intravirion. Residues T29 to Q49 form a helical; Signal-anchor for type III membrane protein membrane-spanning segment. Over T50–E189 the chain is Virion surface.

The protein belongs to the orthopoxvirus OPG107 family. As to quaternary structure, part of a stable entry-fusion complex (EFC) which is at least composed of proteins OPG143, OPG147, OPG155, OPG86, OPG94, OPG107, OPG104, and OPG099. Formation of the viral membrane is necessary for the assembly of the complex. Post-translationally, contains two intramolecular disulfide bonds. They are created by the viral disulfide bond formation pathway, a poxvirus-specific pathway that operates on the cytoplasmic side of the MV membranes.

It localises to the virion membrane. Its subcellular location is the host endoplasmic reticulum membrane. Envelope protein part of the entry-fusion complex responsible for the virus membrane fusion with host cell membrane during virus entry. Also plays a role in cell-cell fusion (syncytium formation). The polypeptide is Protein H2 (OPG107) (Vaccinia virus (strain Copenhagen) (VACV)).